A 711-amino-acid chain; its full sequence is Long-chain-fatty-acid--CoA ligase 4 (711 aa).

The helical; Signal-anchor for type III membrane protein transmembrane segment at 8–28 threads the bilayer; sequence LTIILLPVHLLITIYSALIFI. Topologically, residues 29–711 are cytoplasmic; that stretch reads PWYFLTNAKK…KDIERMYGGK (683 aa). Residue Ser-447 is modified to Phosphoserine.

The protein belongs to the ATP-dependent AMP-binding enzyme family. Requires Mg(2+) as cofactor. Abundant in steroidogenic tissues, also found in the kidney, brain and liver.

It localises to the mitochondrion outer membrane. The protein resides in the peroxisome membrane. The protein localises to the microsome membrane. Its subcellular location is the endoplasmic reticulum membrane. It is found in the cell membrane. The catalysed reaction is a long-chain fatty acid + ATP + CoA = a long-chain fatty acyl-CoA + AMP + diphosphate. It catalyses the reaction (5Z,8Z,11Z,14Z)-eicosatetraenoate + ATP + CoA = (5Z,8Z,11Z,14Z)-eicosatetraenoyl-CoA + AMP + diphosphate. It carries out the reaction 15-hydroxy-(5Z,8Z,11Z,13E)-eicosatetraenoate + ATP + CoA = 15-hydroxy-(5Z,8Z,11Z,13E)-eicosatetraenoyl-CoA + AMP + diphosphate. The enzyme catalyses 12-hydroxy-(5Z,8Z,10E,14Z)-eicosatetraenoate + ATP + CoA = 12-hydroxy-(5Z,8Z,10E,14Z)-eicosatetraenoyl-CoA + AMP + diphosphate. The catalysed reaction is 5-hydroxy-(6E,8Z,11Z,14Z)-eicosatetraenoate + ATP + CoA = 5-hydroxy-(6E,8Z,11Z,14Z)-eicosatetraenoyl-CoA + AMP + diphosphate. It catalyses the reaction 5,6-epoxy-(8Z,11Z,14Z)-eicosatrienoate + ATP + CoA = 5,6-epoxy-(8Z,11Z,14Z)-eicosatrienoyl-CoA + AMP + diphosphate. It carries out the reaction 14,15-epoxy-(5Z,8Z,11Z)-eicosatrienoate + ATP + CoA = 14,15-epoxy-(5Z,8Z,11Z)-eicosatrienoyl-CoA + AMP + diphosphate. The enzyme catalyses 11,12-epoxy-(5Z,8Z,14Z)-eicosatrienoate + ATP + CoA = 11,12-epoxy-(5Z,8Z,14Z)-eicosatrienoyl-CoA + AMP + diphosphate. The catalysed reaction is 8,9-epoxy-(5Z,11Z,14Z)-eicosatrienoate + ATP + CoA = 8,9-epoxy-(5Z,11Z,14Z)-eicosatrienoyl-CoA + AMP + diphosphate. It catalyses the reaction hexadecanoate + ATP + CoA = hexadecanoyl-CoA + AMP + diphosphate. It carries out the reaction (E)-hexadec-2-enoate + ATP + CoA = (2E)-hexadecenoyl-CoA + AMP + diphosphate. Both triacsin C and rosiglitazone inhibit arachidonoyl-CoA ligase activity. In terms of biological role, catalyzes the conversion of long-chain fatty acids to their active form acyl-CoA for both synthesis of cellular lipids, and degradation via beta-oxidation. Preferentially activates arachidonate and eicosapentaenoate as substrates. Preferentially activates 8,9-EET &gt; 14,15-EET &gt; 5,6-EET &gt; 11,12-EET. Modulates glucose-stimulated insulin secretion by regulating the levels of unesterified EETs. Modulates prostaglandin E2 secretion. In Mus musculus (Mouse), this protein is Long-chain-fatty-acid--CoA ligase 4 (Acsl4).